We begin with the raw amino-acid sequence, 189 residues long: Glycerol-3-phosphate acyltransferase (189 aa).

5 helical membrane-spanning segments follow: residues 1-21, 51-71, 77-97, 111-131, and 151-171; these read MFWL…AILL, LAIL…LIAS, LQDQ…PLYF, MLLG…LLTF, and LLAW…LLIV.

It belongs to the PlsY family. As to quaternary structure, probably interacts with PlsX.

It localises to the cell inner membrane. It carries out the reaction an acyl phosphate + sn-glycerol 3-phosphate = a 1-acyl-sn-glycero-3-phosphate + phosphate. It participates in lipid metabolism; phospholipid metabolism. Catalyzes the transfer of an acyl group from acyl-phosphate (acyl-PO(4)) to glycerol-3-phosphate (G3P) to form lysophosphatidic acid (LPA). This enzyme utilizes acyl-phosphate as fatty acyl donor, but not acyl-CoA or acyl-ACP. This chain is Glycerol-3-phosphate acyltransferase, found in Pseudomonas fluorescens (strain Pf0-1).